Here is a 447-residue protein sequence, read N- to C-terminus: Probable glycine dehydrogenase (decarboxylating) subunit 1 (447 aa).

This sequence belongs to the GcvP family. N-terminal subunit subfamily. In terms of assembly, the glycine cleavage system is composed of four proteins: P, T, L and H. In this organism, the P 'protein' is a heterodimer of two subunits.

The catalysed reaction is N(6)-[(R)-lipoyl]-L-lysyl-[glycine-cleavage complex H protein] + glycine + H(+) = N(6)-[(R)-S(8)-aminomethyldihydrolipoyl]-L-lysyl-[glycine-cleavage complex H protein] + CO2. The glycine cleavage system catalyzes the degradation of glycine. The P protein binds the alpha-amino group of glycine through its pyridoxal phosphate cofactor; CO(2) is released and the remaining methylamine moiety is then transferred to the lipoamide cofactor of the H protein. In Halalkalibacterium halodurans (strain ATCC BAA-125 / DSM 18197 / FERM 7344 / JCM 9153 / C-125) (Bacillus halodurans), this protein is Probable glycine dehydrogenase (decarboxylating) subunit 1.